Here is a 200-residue protein sequence, read N- to C-terminus: Histone chaperone asf1b (200 aa).

This sequence belongs to the ASF1 family. In terms of assembly, interacts with histone H3 and histone H4.

The protein resides in the nucleus. Functionally, histone chaperone that facilitates histone deposition and histone exchange and removal during nucleosome assembly and disassembly. This chain is Histone chaperone asf1b (asf1b), found in Xenopus tropicalis (Western clawed frog).